The sequence spans 886 residues: Leucine-rich repeat-containing protein sog2 (886 aa).

LRR repeat units follow at residues 28-49 (NALT…QLER), 53-74 (RIAR…ILKF), 76-97 (RLRY…LCRL), 99-120 (SLEI…FGAL), 122-143 (NLKV…IAHM), and 145-166 (NLEI…IANN). Disordered regions lie at residues 236–288 (SPGM…THPP), 301–364 (SPRQ…ASPI), 394–431 (PTQL…STRL), and 455–483 (RIFA…TNDS). Residues 243-277 (VTPSPHSHSPAGHQQSTPKSTLSKTNENSEGTLYD) are compositionally biased toward polar residues. S301 carries the phosphoserine modification. Composition is skewed to polar residues over residues 312–347 (SLAT…SSVA), 394–406 (PTQL…TSAI), and 419–431 (SNST…STRL). At S464 the chain carries Phosphoserine.

The protein resides in the cytoplasm. It localises to the nucleus. This is Leucine-rich repeat-containing protein sog2 from Schizosaccharomyces pombe (strain 972 / ATCC 24843) (Fission yeast).